Consider the following 270-residue polypeptide: MTEQRTVTNNATHYFYPTVLLFSILLTGGVLTATSFYNKHLRQYKSAKDIPEAIFKKQWLYGKVTSVGDGDNFHFFHTPSGIFGGWGWLRSIPELQTVAFDASVEVPQSVRWWNKLFSAKVANYKSHFMSLHVPYKGRRNLPTISVRLCGVDAPERSHFGKTAQPFSDEALNWLRYKILGQYVWVKPLAVDQYGRCVARVELWSWLKGWQNISIEMLKEGVGVVYEGKVGAEFDNQEDIYLYEELNSKKAKRGLWSQRKFETPGAYKKRT.

A helical membrane pass occupies residues phenylalanine 15–tyrosine 37. The TNase-like domain occupies glutamine 58–glutamine 257. The active site involves arginine 147. Aspartate 152 serves as a coordination point for Ca(2+). Active-site residues include glutamate 155 and arginine 195.

The protein belongs to the LCL3 family.

It is found in the mitochondrion. Its subcellular location is the membrane. The polypeptide is Probable endonuclease LCL3 (LCL3) (Kluyveromyces lactis (strain ATCC 8585 / CBS 2359 / DSM 70799 / NBRC 1267 / NRRL Y-1140 / WM37) (Yeast)).